Here is an 808-residue protein sequence, read N- to C-terminus: Dynamin-like protein B (808 aa).

One can recognise a Dynamin-type G domain in the interval 43–340 (FIETPEFVFI…TWRKYLDSVP (298 aa)). The tract at residues 53-60 (GKDGNGKS) is G1 motif. 53–60 (GKDGNGKS) is a binding site for GTP. Positions 79 to 80 (LR) are G2 motif. The interval 150–153 (EPPS) is G3 motif. GTP-binding positions include 150–154 (EPPSV) and 239–242 (NKFH). A G4 motif region spans residues 239–242 (NKFH). The G5 motif stretch occupies residues 276–279 (PSTA). 2 disordered regions span residues 536-565 (SSFR…SSSI) and 665-695 (SLNN…NSNH). Low complexity-rich tracts occupy residues 552 to 565 (SSPS…SSSI) and 665 to 694 (SLNN…NNSN).

This sequence belongs to the TRAFAC class dynamin-like GTPase superfamily. Dynamin/Fzo/YdjA family.

The protein resides in the cytoplasm. The catalysed reaction is GTP + H2O = GDP + phosphate + H(+). Involved in cytokinesis. May hydrolyze GTP. The sequence is that of Dynamin-like protein B (dlpB) from Dictyostelium discoideum (Social amoeba).